We begin with the raw amino-acid sequence, 1413 residues long: DNA-directed RNA polymerase subunit beta' (1413 aa).

Cys70, Cys72, Cys85, and Cys88 together coordinate Zn(2+). Positions 460, 462, and 464 each coordinate Mg(2+). Zn(2+) contacts are provided by Cys819, Cys893, Cys900, and Cys903. The segment at Glu1392–Glu1413 is disordered.

It belongs to the RNA polymerase beta' chain family. The RNAP catalytic core consists of 2 alpha, 1 beta, 1 beta' and 1 omega subunit. When a sigma factor is associated with the core the holoenzyme is formed, which can initiate transcription. Mg(2+) serves as cofactor. Zn(2+) is required as a cofactor.

The enzyme catalyses RNA(n) + a ribonucleoside 5'-triphosphate = RNA(n+1) + diphosphate. DNA-dependent RNA polymerase catalyzes the transcription of DNA into RNA using the four ribonucleoside triphosphates as substrates. This is DNA-directed RNA polymerase subunit beta' from Burkholderia orbicola (strain MC0-3).